The primary structure comprises 248 residues: 5'-nucleotidase SurE (248 aa).

A divalent metal cation contacts are provided by aspartate 8, aspartate 9, serine 39, and asparagine 91.

Belongs to the SurE nucleotidase family. It depends on a divalent metal cation as a cofactor.

Its subcellular location is the cytoplasm. It carries out the reaction a ribonucleoside 5'-phosphate + H2O = a ribonucleoside + phosphate. Its function is as follows. Nucleotidase that shows phosphatase activity on nucleoside 5'-monophosphates. The chain is 5'-nucleotidase SurE from Citrifermentans bemidjiense (strain ATCC BAA-1014 / DSM 16622 / JCM 12645 / Bem) (Geobacter bemidjiensis).